A 232-amino-acid polypeptide reads, in one-letter code: ATP synthase subunit a (232 aa).

A run of 6 helical transmembrane segments spans residues 18–38 (LLFI…IAFI), 74–94 (WAGL…LGLF), 107–127 (TYSL…YLAF), 142–162 (ALIP…PIAL), 173–193 (GHLL…SLMV), and 195–215 (SIPI…VACI).

This sequence belongs to the ATPase A chain family. F-type ATPases have 2 components, CF(1) - the catalytic core - and CF(0) - the membrane proton channel. CF(1) has five subunits: alpha(3), beta(3), gamma(1), delta(1), epsilon(1). CF(0) has three main subunits: a, b and c.

It localises to the mitochondrion inner membrane. Functionally, mitochondrial membrane ATP synthase (F(1)F(0) ATP synthase or Complex V) produces ATP from ADP in the presence of a proton gradient across the membrane which is generated by electron transport complexes of the respiratory chain. F-type ATPases consist of two structural domains, F(1) - containing the extramembraneous catalytic core and F(0) - containing the membrane proton channel, linked together by a central stalk and a peripheral stalk. During catalysis, ATP synthesis in the catalytic domain of F(1) is coupled via a rotary mechanism of the central stalk subunits to proton translocation. Key component of the proton channel; it may play a direct role in the translocation of protons across the membrane. The chain is ATP synthase subunit a (ATP6) from Paracentrotus lividus (Common sea urchin).